A 129-amino-acid chain; its full sequence is MDINPLLYLQAFNNDATTFNTQGHILEQQSDSPYFDTFANAMQAYLDTKQGGNDEEGTIILMDDEDFNDSESLEDFLQMLSEEELNDGFSSDDEPEEHVILTEDNQGEPSETPQATFDITEFIKIDDED.

Acidic residues predominate over residues Asn-86–Glu-96. The interval Asn-86–Thr-116 is disordered. The segment covering Glu-103–Thr-116 has biased composition (polar residues).

The protein belongs to the asfivirus D129L family.

This is an uncharacterized protein from African swine fever virus (strain Badajoz 1971 Vero-adapted) (Ba71V).